A 275-amino-acid chain; its full sequence is Two-component response regulator PprB (275 aa).

Residues 10-128 (SVLIIDDEPQ…ELLHGLERLE (119 aa)) form the Response regulatory domain. Asp-60 is subject to 4-aspartylphosphate. Residues 173-205 (SQPSALRSEDSQPSAPPAPVAESQVSPSNPLFG) form a disordered region. The 66-residue stretch at 200 to 265 (SNPLFGKLSP…QLALALSPAA (66 aa)) folds into the HTH luxR-type domain. The segment at residues 224-243 (NYQIAYELGITENTVKLYVS) is a DNA-binding region (H-T-H motif).

Post-translationally, phosphorylated by PprA.

In terms of biological role, member of the two-component regulatory system PprA/PprB involved in biofilm formation by controlling the expression of many related genes including type IVb pili major subunit flp pilin, adhesin bapA or cupE fimbriae. Functions as a transcription regulator by direct binding to promoter regions. Negatively regulates its own transcription. The chain is Two-component response regulator PprB from Pseudomonas aeruginosa (strain ATCC 15692 / DSM 22644 / CIP 104116 / JCM 14847 / LMG 12228 / 1C / PRS 101 / PAO1).